Here is a 185-residue protein sequence, read N- to C-terminus: Ribosome-recycling factor (185 aa).

It belongs to the RRF family.

The protein resides in the cytoplasm. Functionally, responsible for the release of ribosomes from messenger RNA at the termination of protein biosynthesis. May increase the efficiency of translation by recycling ribosomes from one round of translation to another. This chain is Ribosome-recycling factor, found in Dehalococcoides mccartyi (strain CBDB1).